The primary structure comprises 109 residues: Nucleoid-associated protein CGSHiEE_00780 (109 aa).

Belongs to the YbaB/EbfC family. In terms of assembly, homodimer.

The protein resides in the cytoplasm. It localises to the nucleoid. In terms of biological role, binds to DNA and alters its conformation. May be involved in regulation of gene expression, nucleoid organization and DNA protection. This is Nucleoid-associated protein CGSHiEE_00780 from Haemophilus influenzae (strain PittEE).